The primary structure comprises 122 residues: Neutral phospholipase A2 agkistrodotoxin (122 aa).

Intrachain disulfides connect C26/C115, C28/C44, C43/C95, C49/C122, C50/C88, C57/C81, and C75/C86. Positions 27, 29, and 31 each coordinate Ca(2+). Residue H47 is part of the active site. A Ca(2+)-binding site is contributed by D48. D89 is an active-site residue.

The cofactor is Ca(2+). Expressed by the venom gland.

The protein localises to the secreted. The catalysed reaction is a 1,2-diacyl-sn-glycero-3-phosphocholine + H2O = a 1-acyl-sn-glycero-3-phosphocholine + a fatty acid + H(+). In terms of biological role, snake venom phospholipase A2 (PLA2) that inhibits neuromuscular transmission by blocking acetylcholine release from the nerve termini. PLA2 catalyzes the calcium-dependent hydrolysis of the 2-acyl groups in 3-sn-phosphoglycerides. This Gloydius halys (Chinese water mocassin) protein is Neutral phospholipase A2 agkistrodotoxin.